Reading from the N-terminus, the 548-residue chain is Natural resistance-associated macrophage protein 1 (548 aa).

The span at Met1 to Gly12 shows a compositional bias: polar residues. Positions Met1 to Glu38 are disordered. The Cytoplasmic portion of the chain corresponds to Met1–Leu55. Residues Trp56–Gly73 traverse the membrane as a helical segment. The Extracellular segment spans residues Asn74 to Gly82. The helical transmembrane segment at Ala83–Leu102 threads the bilayer. Residues Cys103–Glu139 are Cytoplasmic-facing. A helical transmembrane segment spans residues Leu140 to Leu160. Residues Ser161 to Arg164 lie on the Extracellular side of the membrane. Residues Ile165–Leu184 form a helical membrane-spanning segment. The Cytoplasmic portion of the chain corresponds to Asp185 to Glu193. The helical transmembrane segment at Ala194 to Ala214 threads the bilayer. Over Arg215–Glu237 the chain is Extracellular. A helical membrane pass occupies residues Leu238–Leu256. The Cytoplasmic segment spans residues His257–Glu284. A helical membrane pass occupies residues Ala285 to Gly304. Residues Gln305–Gly346 lie on the Extracellular side of the membrane. 2 N-linked (GlcNAc...) asparagine glycosylation sites follow: Asn321 and Asn335. Residues Val347–Leu366 form a helical membrane-spanning segment. Residues Ala367–Arg397 lie on the Cytoplasmic side of the membrane. The chain crosses the membrane as a helical span at residues Val398–Phe415. Residues Arg416–Asp426 lie on the Extracellular side of the membrane. The chain crosses the membrane as a helical span at residues Leu427–Thr447. Residues Ser448 to Lys463 lie on the Cytoplasmic side of the membrane. A helical membrane pass occupies residues Ile464–Val485. Topologically, residues Pro486–Tyr493 are extracellular. A helical transmembrane segment spans residues Phe494–Trp513. Over Thr514–Gly548 the chain is Cytoplasmic.

It belongs to the NRAMP family.

The protein resides in the late endosome membrane. It localises to the lysosome membrane. The catalysed reaction is Zn(2+)(in) + H(+)(out) = Zn(2+)(out) + H(+)(in). It carries out the reaction Fe(2+)(in) + H(+)(out) = Fe(2+)(out) + H(+)(in). The enzyme catalyses Mn(2+)(in) + H(+)(out) = Mn(2+)(out) + H(+)(in). Macrophage-specific antiporter that fluxes metal ions in either direction against a proton gradient. Localized to late endosomal lysosomal membranes, delivers bivalent cations from the cytosol into these acidic compartments where they may directly affect antimicrobial activity. Involved in iron metabolism and host natural resistance to infection with intracellular parasites. Pathogen resistance involves sequestration of Fe(2+) and Mn(2+), cofactors of both prokaryotic and eukaryotic catalases and superoxide dismutases, not only to protect the macrophage against its own generation of reactive oxygen species, but to deny the cations to the pathogen for synthesis of its protective enzymes. In Ovis aries (Sheep), this protein is Natural resistance-associated macrophage protein 1 (SLC11A1).